The primary structure comprises 448 residues: Bifunctional protein GlmU (448 aa).

The pyrophosphorylase stretch occupies residues 1 to 230 (MRSCLSIVLA…FDNIVGINNC (230 aa)). UDP-N-acetyl-alpha-D-glucosamine is bound by residues 9-12 (LAAG), lysine 23, glutamine 76, and 81-82 (GT). Residue aspartate 106 coordinates Mg(2+). Positions 142, 156, 171, and 228 each coordinate UDP-N-acetyl-alpha-D-glucosamine. Residue asparagine 228 coordinates Mg(2+). The interval 231–251 (FELFEADSLWQKRKARDLMLS) is linker. The segment at 252-448 (GVTILKPETV…VRLSGNQQKK (197 aa)) is N-acetyltransferase. UDP-N-acetyl-alpha-D-glucosamine contacts are provided by arginine 317 and lysine 335. Histidine 347 (proton acceptor) is an active-site residue. Tyrosine 350 and asparagine 361 together coordinate UDP-N-acetyl-alpha-D-glucosamine. Acetyl-CoA is bound by residues alanine 364, 370–371 (NY), serine 389, serine 407, and arginine 424.

In the N-terminal section; belongs to the N-acetylglucosamine-1-phosphate uridyltransferase family. The protein in the C-terminal section; belongs to the transferase hexapeptide repeat family. In terms of assembly, homotrimer. The cofactor is Mg(2+).

It is found in the cytoplasm. The catalysed reaction is alpha-D-glucosamine 1-phosphate + acetyl-CoA = N-acetyl-alpha-D-glucosamine 1-phosphate + CoA + H(+). It catalyses the reaction N-acetyl-alpha-D-glucosamine 1-phosphate + UTP + H(+) = UDP-N-acetyl-alpha-D-glucosamine + diphosphate. Its pathway is nucleotide-sugar biosynthesis; UDP-N-acetyl-alpha-D-glucosamine biosynthesis; N-acetyl-alpha-D-glucosamine 1-phosphate from alpha-D-glucosamine 6-phosphate (route II): step 2/2. It participates in nucleotide-sugar biosynthesis; UDP-N-acetyl-alpha-D-glucosamine biosynthesis; UDP-N-acetyl-alpha-D-glucosamine from N-acetyl-alpha-D-glucosamine 1-phosphate: step 1/1. It functions in the pathway bacterial outer membrane biogenesis; LPS lipid A biosynthesis. In terms of biological role, catalyzes the last two sequential reactions in the de novo biosynthetic pathway for UDP-N-acetylglucosamine (UDP-GlcNAc). The C-terminal domain catalyzes the transfer of acetyl group from acetyl coenzyme A to glucosamine-1-phosphate (GlcN-1-P) to produce N-acetylglucosamine-1-phosphate (GlcNAc-1-P), which is converted into UDP-GlcNAc by the transfer of uridine 5-monophosphate (from uridine 5-triphosphate), a reaction catalyzed by the N-terminal domain. This is Bifunctional protein GlmU from Bartonella quintana (strain Toulouse) (Rochalimaea quintana).